The chain runs to 249 residues: Isoprenyl transferase (249 aa).

The active site involves D25. D25 is a binding site for Mg(2+). Substrate is bound by residues 26-29 (GNGR), W30, R38, H42, and 70-72 (STE). The active-site Proton acceptor is the N73. Substrate-binding positions include W74, R76, R197, and 203–205 (RLS). E216 is a binding site for Mg(2+).

This sequence belongs to the UPP synthase family. Homodimer. The cofactor is Mg(2+).

In terms of biological role, catalyzes the condensation of isopentenyl diphosphate (IPP) with allylic pyrophosphates generating different type of terpenoids. This chain is Isoprenyl transferase, found in Streptococcus pyogenes serotype M3 (strain ATCC BAA-595 / MGAS315).